The following is a 338-amino-acid chain: NADPH dehydrogenase (338 aa).

22–25 (SPMC) serves as a coordination point for FMN. Tyrosine 27 is a binding site for substrate. Alanine 59 and glutamine 101 together coordinate FMN. Substrate is bound at residue 163–166 (HAAH). FMN contacts are provided by residues arginine 214 and 306-307 (GR).

It belongs to the NADH:flavin oxidoreductase/NADH oxidase family. NamA subfamily. As to quaternary structure, homotetramer. FMN serves as cofactor.

The catalysed reaction is A + NADPH + H(+) = AH2 + NADP(+). In terms of biological role, catalyzes the reduction of the double bond of an array of alpha,beta-unsaturated aldehydes and ketones. It also reduces the nitro group of nitroester and nitroaromatic compounds. It could have a role in detoxification processes. This chain is NADPH dehydrogenase, found in Listeria innocua serovar 6a (strain ATCC BAA-680 / CLIP 11262).